The primary structure comprises 379 residues: Carbamoyl phosphate synthase small chain (379 aa).

The segment at 1 to 189 (MSKSALLVLE…GLPEAKDDSE (189 aa)) is CPSase. L-glutamine contacts are provided by Ser-47, Gly-241, and Gly-243. A Glutamine amidotransferase type-1 domain is found at 193-379 (HVVAYDFGAK…FIELIKQHSA (187 aa)). Cys-269 acts as the Nucleophile in catalysis. The L-glutamine site is built by Leu-270, Gln-273, Asn-311, Gly-313, and Phe-314. Catalysis depends on residues His-353 and Glu-355.

This sequence belongs to the CarA family. As to quaternary structure, composed of two chains; the small (or glutamine) chain promotes the hydrolysis of glutamine to ammonia, which is used by the large (or ammonia) chain to synthesize carbamoyl phosphate. Tetramer of heterodimers (alpha,beta)4.

It catalyses the reaction hydrogencarbonate + L-glutamine + 2 ATP + H2O = carbamoyl phosphate + L-glutamate + 2 ADP + phosphate + 2 H(+). It carries out the reaction L-glutamine + H2O = L-glutamate + NH4(+). The protein operates within amino-acid biosynthesis; L-arginine biosynthesis; carbamoyl phosphate from bicarbonate: step 1/1. It functions in the pathway pyrimidine metabolism; UMP biosynthesis via de novo pathway; (S)-dihydroorotate from bicarbonate: step 1/3. Its function is as follows. Small subunit of the glutamine-dependent carbamoyl phosphate synthetase (CPSase). CPSase catalyzes the formation of carbamoyl phosphate from the ammonia moiety of glutamine, carbonate, and phosphate donated by ATP, constituting the first step of 2 biosynthetic pathways, one leading to arginine and/or urea and the other to pyrimidine nucleotides. The small subunit (glutamine amidotransferase) binds and cleaves glutamine to supply the large subunit with the substrate ammonia. This Vibrio vulnificus (strain YJ016) protein is Carbamoyl phosphate synthase small chain.